Here is a 143-residue protein sequence, read N- to C-terminus: uncharacterized protein (143 aa).

The signal sequence occupies residues 1 to 24; sequence MKKMLMLAFTFLLALTIHVGEASA.

This is an uncharacterized protein from Bacillus subtilis (strain 168).